A 470-amino-acid polypeptide reads, in one-letter code: Methylenetetrahydrofolate--tRNA-(uracil-5-)-methyltransferase TrmFO (470 aa).

An FAD-binding site is contributed by 10 to 15; that stretch reads GAGLAG.

The protein belongs to the MnmG family. TrmFO subfamily. The cofactor is FAD.

It localises to the cytoplasm. The catalysed reaction is uridine(54) in tRNA + (6R)-5,10-methylene-5,6,7,8-tetrahydrofolate + NADH + H(+) = 5-methyluridine(54) in tRNA + (6S)-5,6,7,8-tetrahydrofolate + NAD(+). The enzyme catalyses uridine(54) in tRNA + (6R)-5,10-methylene-5,6,7,8-tetrahydrofolate + NADPH + H(+) = 5-methyluridine(54) in tRNA + (6S)-5,6,7,8-tetrahydrofolate + NADP(+). Functionally, catalyzes the folate-dependent formation of 5-methyl-uridine at position 54 (M-5-U54) in all tRNAs. In Prochlorococcus marinus (strain MIT 9301), this protein is Methylenetetrahydrofolate--tRNA-(uracil-5-)-methyltransferase TrmFO.